The chain runs to 420 residues: Transcription factor bHLH89 (420 aa).

The tract at residues 196 to 216 (EENNNLDDGLNRKGRGSKKRK) is disordered. Positions 207–216 (RKGRGSKKRK) are enriched in basic residues. The bHLH domain maps to 212-261 (SKKRKIFPTERERRVHFKDRFGDLKNLIPNPTKNDRASIVGEAIDYIKEL).

In terms of assembly, homodimer. In terms of tissue distribution, flowers.

It is found in the nucleus. The chain is Transcription factor bHLH89 (BHLH89) from Arabidopsis thaliana (Mouse-ear cress).